The chain runs to 347 residues: Protein RecA (347 aa).

Residue 65 to 72 coordinates ATP; that stretch reads GPESSGKT. Residues 327-336 are compositionally biased toward basic and acidic residues; it reads KFEPTELSRE. The disordered stretch occupies residues 327 to 347; that stretch reads KFEPTELSREEGDEDTLEDTM. The segment covering 337 to 347 has biased composition (acidic residues); it reads EGDEDTLEDTM.

It belongs to the RecA family.

The protein localises to the cytoplasm. In terms of biological role, can catalyze the hydrolysis of ATP in the presence of single-stranded DNA, the ATP-dependent uptake of single-stranded DNA by duplex DNA, and the ATP-dependent hybridization of homologous single-stranded DNAs. It interacts with LexA causing its activation and leading to its autocatalytic cleavage. In Xylella fastidiosa (strain 9a5c), this protein is Protein RecA.